The chain runs to 1006 residues: Unconventional myosin-Id (1006 aa).

Ala-2 is modified (N-acetylalanine). A Myosin motor domain is found at 9–695; sequence FGKADFVLMD…TLFTLEELRA (687 aa). Residue 102-109 coordinates ATP; the sequence is GESGAGKT. At Ser-200 the chain carries Phosphoserine. Residue Tyr-536 is modified to Phosphotyrosine. Positions 572–594 are actin-binding; it reads MIALVDNLASKEPYYVRCIKPND. 2 IQ domains span residues 699–719 and 721–741; these read IRIVLFLQKVWRGTLARMRYK and TKAALTIIRYYRHYKVKSYIQ. In terms of domain architecture, TH1 spans 812-1005; that stretch reads GQRADLGLQR…RSGFILSVPG (194 aa).

Belongs to the TRAFAC class myosin-kinesin ATPase superfamily. Myosin family. In terms of assembly, interacts (via the two IQ motifs) with calmodulin. Binds an additional calmodulin chain via a third, C-terminal region. Interacts with F-actin.

The protein localises to the cytoplasm. It localises to the perikaryon. Its subcellular location is the cell projection. It is found in the dendrite. The protein resides in the early endosome. The protein localises to the cell cortex. Its function is as follows. Unconventional myosin that functions as actin-based motor protein with ATPase activity. Plays a role in endosomal protein trafficking, and especially in the transfer of cargo proteins from early to recycling endosomes. Required for normal planar cell polarity in ciliated tracheal cells, for normal rotational polarity of cilia, and for coordinated, unidirectional ciliary movement in the trachea. Required for normal, polarized cilia organization in brain ependymal epithelial cells. This chain is Unconventional myosin-Id (MYO1D), found in Canis lupus familiaris (Dog).